We begin with the raw amino-acid sequence, 203 residues long: ATP-dependent Clp protease proteolytic subunit 2 (203 aa).

Ser-101 functions as the Nucleophile in the catalytic mechanism. His-126 is an active-site residue.

It belongs to the peptidase S14 family. As to quaternary structure, fourteen ClpP subunits assemble into 2 heptameric rings which stack back to back to give a disk-like structure with a central cavity, resembling the structure of eukaryotic proteasomes.

Its subcellular location is the cytoplasm. The catalysed reaction is Hydrolysis of proteins to small peptides in the presence of ATP and magnesium. alpha-casein is the usual test substrate. In the absence of ATP, only oligopeptides shorter than five residues are hydrolyzed (such as succinyl-Leu-Tyr-|-NHMec, and Leu-Tyr-Leu-|-Tyr-Trp, in which cleavage of the -Tyr-|-Leu- and -Tyr-|-Trp bonds also occurs).. Cleaves peptides in various proteins in a process that requires ATP hydrolysis. Has a chymotrypsin-like activity. Plays a major role in the degradation of misfolded proteins. The protein is ATP-dependent Clp protease proteolytic subunit 2 of Prochlorococcus marinus (strain MIT 9312).